The following is a 517-amino-acid chain: BTB/POZ domain-containing protein At3g49900 (517 aa).

Positions 28-37 are enriched in low complexity; sequence SSSSSSLSLS. Positions 28–49 are disordered; that stretch reads SSSSSSLSLSPKQPINLSSSPS. Positions 38–49 are enriched in polar residues; sequence PKQPINLSSSPS. One can recognise a BTB domain in the interval 67–130; it reads PDVFVNVGGT…CYGAHIELTP (64 aa). Residues 224–307 enclose the NPH3 domain; it reads LPAGDFNVVA…VRAMLQEQLN (84 aa). The tract at residues 409-456 is disordered; sequence ARSASFHCVHQPSNVNKTQRGDRGSVSNLSTTYRRRRASPPQAQPQKS.

Belongs to the NPH3 family.

The protein operates within protein modification; protein ubiquitination. Functionally, may act as a substrate-specific adapter of an E3 ubiquitin-protein ligase complex (CUL3-RBX1-BTB) which mediates the ubiquitination and subsequent proteasomal degradation of target proteins. In Arabidopsis thaliana (Mouse-ear cress), this protein is BTB/POZ domain-containing protein At3g49900.